The following is a 22-amino-acid chain: Mu-conotoxin CnIIIA (22 aa).

Disulfide bonds link Cys3/Cys15, Cys4/Cys21, and Cys10/Cys22. Cys22 is modified (cysteine amide).

It belongs to the conotoxin M superfamily. In terms of tissue distribution, expressed by the venom duct. Has not been isolated from the crude venom.

The protein resides in the secreted. In terms of biological role, mu-conotoxins block voltage-gated sodium channels (Nav). This synthetic toxin moderately blocks rNav1.1/SCN1A, rNav1.2/SCN2A, rNav1.3/SCN3A, rNav1.4/SCN4A, rNav1.5/SCN5A, and mNav1.6/SCN8A. This block is very slowly reversible. Causes seizures when injected intracranially into mice. This is Mu-conotoxin CnIIIA from Conus consors (Singed cone).